Reading from the N-terminus, the 529-residue chain is MSNAPFLSEVSKRRTFAIISHPDAGKTTITEKVLLFGRAIQTAGTVKGRGSSQHAKSDWMEMEKERGISVTTSVMQFPYNDCLVNLLDTPGHEDFSEDTYRTLTAVDSCLMVIDAAKGVEDRTRKLMEVTRLRDTPIVTFMNKLDRDIRDPMELLDEVESELNIACAPVSWPIGCGKEFKGVYHIHRDETILYSTGQGHTIQEQRIIKGLDNPDLDAEVGADLAEQLREELELVLGASHEFDQEMFLKGELTPVFFGTALGNFGVDHMLDGLTDWAPAPLPRQANERAVEATEDKFTGFVFKIQANMDPKHRDRIAFMRIVSGTYTQGMKMNHVRLGKQVNISDAVTFMAGDRSRAEAAYAGDIIGLHNHGTIQIGDTFTQGELLKFSGIPNFAPELFRRIRLRDPLKQKQLLKGLVQLSEEGAVQVFRPLQNNDLIVGAVGVLQFDVVVARLKSEYNVEAIYESVNVATARWVECGDAKKLDEFQRKNQTNLALDGGDNLTYIAPTMVNLNLAKERFPEVEFRATREH.

Residues 11-280 (SKRRTFAIIS…GLTDWAPAPL (270 aa)) enclose the tr-type G domain. GTP contacts are provided by residues 20–27 (SHPDAGKT), 88–92 (DTPGH), and 142–145 (NKLD).

Belongs to the TRAFAC class translation factor GTPase superfamily. Classic translation factor GTPase family. PrfC subfamily.

It is found in the cytoplasm. Its function is as follows. Increases the formation of ribosomal termination complexes and stimulates activities of RF-1 and RF-2. It binds guanine nucleotides and has strong preference for UGA stop codons. It may interact directly with the ribosome. The stimulation of RF-1 and RF-2 is significantly reduced by GTP and GDP, but not by GMP. This chain is Peptide chain release factor 3, found in Vibrio vulnificus (strain YJ016).